The chain runs to 68 residues: Acylphosphatase (68 aa).

One can recognise an Acylphosphatase-like domain in the interval R3–P68. Active-site residues include R18 and N36.

The protein belongs to the acylphosphatase family.

It carries out the reaction an acyl phosphate + H2O = a carboxylate + phosphate + H(+). The chain is Acylphosphatase (acyP) from Oleidesulfovibrio alaskensis (strain ATCC BAA-1058 / DSM 17464 / G20) (Desulfovibrio alaskensis).